The primary structure comprises 485 residues: Probable RNA-binding protein 46 (485 aa).

3 consecutive RRM domains span residues 61-139 (CEVF…VSLD), 141-223 (CRLF…WADP), and 236-308 (KVLY…LAKP).

Interacts with YTHDC2, MEIOC, MOV10, CNOT6L, DDX4, UPF1 and PABPC1.

The protein localises to the cytoplasm. In terms of biological role, essential for male and female fertility, playing a crucial role in regulating germ cell development by ensuring the proper progression of meiosis prophase I. Regulates mitotic-to-meiotic transition in spermatogenesis by forming a complex with MEIOC and YTHDC2 which recognizes and down-regulates mitotic transcripts for a successful meiotic entry. Required for normal synaptonemal complex formation during meiosis, binding meiotic cohesin subunit mRNAs containing GCCUAU/GUUCGA motifs in their 3'UTRs regions and positively regulating their translation. Required for spermatogonial differentiation in both developing and adult testis. The protein is Probable RNA-binding protein 46 (RBM46) of Macaca fascicularis (Crab-eating macaque).